The primary structure comprises 506 residues: Galactose/methyl galactoside import ATP-binding protein MglA (506 aa).

2 consecutive ABC transporter domains span residues 14 to 249 and 264 to 506; these read LEMS…VGRS and VILE…SLHL. An ATP-binding site is contributed by 46–53; it reads GENGAGKS.

It belongs to the ABC transporter superfamily. Galactose/methyl galactoside importer (TC 3.A.1.2.3) family. In terms of assembly, the complex is composed of one ATP-binding protein (MglA), two transmembrane proteins (MglC) and a solute-binding protein (MglB).

Its subcellular location is the cell inner membrane. It carries out the reaction D-galactose(out) + ATP + H2O = D-galactose(in) + ADP + phosphate + H(+). It catalyses the reaction methyl beta-D-galactoside(out) + ATP + H2O = methyl beta-D-galactoside(in) + ADP + phosphate + H(+). Functionally, part of the ABC transporter complex MglABC involved in galactose/methyl galactoside import. Responsible for energy coupling to the transport system. The polypeptide is Galactose/methyl galactoside import ATP-binding protein MglA (Escherichia coli O6:K15:H31 (strain 536 / UPEC)).